Consider the following 79-residue polypeptide: Small ribosomal subunit protein bS18c (79 aa).

This sequence belongs to the bacterial ribosomal protein bS18 family. In terms of assembly, part of the 30S ribosomal subunit.

The protein resides in the plastid. Its subcellular location is the chloroplast. This chain is Small ribosomal subunit protein bS18c, found in Chaetosphaeridium globosum (Charophycean green alga).